Reading from the N-terminus, the 320-residue chain is Prophage side tail fiber protein homolog StfQ (320 aa).

Disordered stretches follow at residues 147-213 (SGRA…HKSS) and 241-270 (TTSG…TAAS). 2 stretches are compositionally biased toward polar residues: residues 172-206 (DLGT…NSAG) and 241-258 (TTSG…SSDG). Residues 261–270 (THSLSGTAAS) are compositionally biased toward low complexity.

The protein belongs to the tail fiber family.

The chain is Prophage side tail fiber protein homolog StfQ (stfQ) from Escherichia coli (strain K12).